Consider the following 918-residue polypeptide: MKYDFDAIEKKWQKYWKENRTYQVNIDRNKPKYYVLDMFPYPSGVGLHVGHPLGYIASDIYARYKRLKGFNVLHPMGYDAYGLPAEQYAIQTGQHPSITTKENINRYRKQLDKIGFCFDWDREIRTCDPKYYQWTQWVFIQMFNSYYCKEAQRARPITELVKILENQGTGGLHLACTKEIHLTANEWQMKDEKSKQAILMNYRIAYLSDIVVNWCPALGTVLANDEISGGISIRGGYTVEQRKMRQWCLRISAYAKRLLEGLDKIEWTDSLKKMQRNWIGRSEGVELRFKIKDENIEFMIFTTRPETIFGVTFIVIAPESEWLTQTIISKKKDSVDSYLNLVKRRTERERISNRKVTGVFTGSYAVHPISGETIPIWISDYILADYGTGAVMAVPAHDSRDYAFAKHFDLPIIPLIEDIDISKESFDIKEGIMTNSDFLNGLSVKQAIQKVKEYIKDENLGKIKVNYRLRDAIFSRQRYWGEPFPIYYKNGIPYAVDEEDLPIKLPEIDKFLPAETGKPPLGRAKNWTYKGYPLELTTMPGFAGSSAYYLRYEDPHNSECLVSSEANEYWQNVDLYIGGIEHATGHLIYSRFWNKFLFDLGIVAKEEPFKKLINQGMIQGRSNFVYRIKNTNTFVSYGLKHQYDVTPIHVDINLVFDDVLNIESFRDWNSEYKNAEFILENGKYVCGWAIEKMSKSMFNTVSPDNIVNRFGADAFRLYEMFLGPLEQSKPWDTKGIDGIARFLKRLWNLFFENDVLKVSNSLPLDKELKSIHKLIKKVSWDIENFSFNTSVAAFMICINELTLLKCSKHSILSDLVIVLAPFAPHIAEELWHLLGNEATIFDSQFPKCNEEYLKEENVKYTVSFNGKARFILNFPKKISEENVKDTVLKCESSKKWLKNKIPKKIIIIPNKIVNIVFD.

A 'HIGH' region motif is present at residues 40-51 (PYPSGVGLHVGH). Positions 692–696 (KMSKS) match the 'KMSKS' region motif. ATP is bound at residue K695.

The protein belongs to the class-I aminoacyl-tRNA synthetase family.

The protein localises to the cytoplasm. It carries out the reaction tRNA(Leu) + L-leucine + ATP = L-leucyl-tRNA(Leu) + AMP + diphosphate. This chain is Leucine--tRNA ligase, found in Azobacteroides pseudotrichonymphae genomovar. CFP2.